Consider the following 608-residue polypeptide: MLPKLKISAFLLKRLERVKQQSSGCLYGVFYGDGTLLLLSFNLSNVGQLNYEQIQHRFPAELDLCGLVKFGDCTDAEAHLNEVIKSVDITDNPILLKCELGTLVGMRASFFVHGKLEEVPYDVMDSEQLYNDFCFTRLQCGFYLQTAATPECVAKEMHVLRKRVADGNLVFKVPHTNIYIHSCGPMDNKLRGESRINDLVQAIPIPSGKENVVADKKKSKTAAQTQLAKHFGATGCEYDLINIDVMRIRTRDLLARDSPPHPALSIAVTTEEQTRAQVPLEIEAMAMLCKNTKLQRLYDVLIESICRALRLFEQSLNEHLAESEGGSLAVPRSHHFYPQGFGHFLSCAYLEGLGDDEPIMQERRKRLHRQFSLPVTRPYFRRANQCHFQGEVDDAPWTPLLNTHVGVRPSAVTDGKEYLVNGNYHYYHYLQQQVQDKGWGCAYRSLQTICSWFVLQGYTNAPIPTHLEVQKYLHKINDKPSSFVGSSQWIGSTEISMCLQGFLKVDSKILHVSSGAELPTIASELAMHFQTQGTPVMIGGGVLAHTIIGVDYCVQSGEVKFLILDPHYTGADELATIQIKGWCGWKSMDFWSKGSYYNLCMPQRPILY.

Catalysis depends on residues cysteine 441, aspartate 565, and histidine 567.

It belongs to the peptidase C78 family.

Thiol protease which recognizes and hydrolyzes the peptide bond at the C-terminal Gly of UFM1, a ubiquitin-like modifier protein bound to a number of target proteins. Does not hydrolyze SUMO1 or ISG15 ubiquitin-like proteins. This Drosophila pseudoobscura pseudoobscura (Fruit fly) protein is Probable Ufm1-specific protease 2.